We begin with the raw amino-acid sequence, 245 residues long: NAD(P)H-hydrate epimerase (245 aa).

Positions 21 to 221 (MREIDRLAVQ…DLGIPPAVYT (201 aa)) constitute a YjeF N-terminal domain. 72–76 (GNGGG) lines the (6S)-NADPHX pocket. K(+) contacts are provided by Asn73 and Asp135. Residues 139–145 (GYSLLGA) and Asp168 contribute to the (6S)-NADPHX site. Ser171 contributes to the K(+) binding site.

The protein belongs to the NnrE/AIBP family. K(+) is required as a cofactor.

The enzyme catalyses (6R)-NADHX = (6S)-NADHX. The catalysed reaction is (6R)-NADPHX = (6S)-NADPHX. Functionally, catalyzes the epimerization of the S- and R-forms of NAD(P)HX, a damaged form of NAD(P)H that is a result of enzymatic or heat-dependent hydration. This is a prerequisite for the S-specific NAD(P)H-hydrate dehydratase to allow the repair of both epimers of NAD(P)HX. The protein is NAD(P)H-hydrate epimerase of Dehalogenimonas lykanthroporepellens (strain ATCC BAA-1523 / JCM 15061 / BL-DC-9).